Consider the following 194-residue polypeptide: Cysteine and glycine-rich protein 2 (194 aa).

Residues 10-61 (CGACGRTVYHAEEVQCDGRSFHRCCFLCMVCRKNLDSTTVAIHDAEVYCKSC) form the LIM zinc-binding 1 domain. The Nuclear localization signal signature appears at 64–69 (KKYGPK). Positions 85–110 (GERLGIKPESSPSPHRPTTNPNTSKF) are disordered. The segment covering 94–110 (SSPSPHRPTTNPNTSKF) has biased composition (polar residues). Residues 120–171 (CSRCGDSVYAAEKVIGAGKPWHKNCFRCAKCGKSLESTTLTEKEGEIYCKGC) form the LIM zinc-binding 2 domain.

The protein localises to the nucleus. In terms of biological role, interacts with zyxin. May be a component of a signal transduction pathway that mediates adhesion-stimulated changes in gene expression. Totally down-regulated in transformed cells. In Coturnix japonica (Japanese quail), this protein is Cysteine and glycine-rich protein 2 (CSRP2).